A 272-amino-acid polypeptide reads, in one-letter code: Putative pyruvate, phosphate dikinase regulatory protein (272 aa).

Residue 149-156 (GVSRTSKT) participates in ADP binding.

This sequence belongs to the pyruvate, phosphate/water dikinase regulatory protein family. PDRP subfamily.

It catalyses the reaction N(tele)-phospho-L-histidyl/L-threonyl-[pyruvate, phosphate dikinase] + ADP = N(tele)-phospho-L-histidyl/O-phospho-L-threonyl-[pyruvate, phosphate dikinase] + AMP + H(+). The catalysed reaction is N(tele)-phospho-L-histidyl/O-phospho-L-threonyl-[pyruvate, phosphate dikinase] + phosphate + H(+) = N(tele)-phospho-L-histidyl/L-threonyl-[pyruvate, phosphate dikinase] + diphosphate. Its function is as follows. Bifunctional serine/threonine kinase and phosphorylase involved in the regulation of the pyruvate, phosphate dikinase (PPDK) by catalyzing its phosphorylation/dephosphorylation. The protein is Putative pyruvate, phosphate dikinase regulatory protein of Lactiplantibacillus plantarum (strain ATCC BAA-793 / NCIMB 8826 / WCFS1) (Lactobacillus plantarum).